A 200-amino-acid polypeptide reads, in one-letter code: Large ribosomal subunit protein uL4 (200 aa).

The interval 38-73 (GRQGTKGQKSRSDVSGGGKRPWRQKGTGRARAGTTR) is disordered.

It belongs to the universal ribosomal protein uL4 family. Part of the 50S ribosomal subunit.

Functionally, one of the primary rRNA binding proteins, this protein initially binds near the 5'-end of the 23S rRNA. It is important during the early stages of 50S assembly. It makes multiple contacts with different domains of the 23S rRNA in the assembled 50S subunit and ribosome. Forms part of the polypeptide exit tunnel. The chain is Large ribosomal subunit protein uL4 from Ectopseudomonas mendocina (strain ymp) (Pseudomonas mendocina).